A 108-amino-acid polypeptide reads, in one-letter code: uncharacterized protein (108 aa).

Positions 81–108 are disordered; the sequence is FKCLDSPPPVPPSSSQGEDEENTVDSQY. Residues 97 to 108 are compositionally biased toward acidic residues; sequence GEDEENTVDSQY.

This is an uncharacterized protein from Saccharomyces cerevisiae (strain ATCC 204508 / S288c) (Baker's yeast).